The following is a 438-amino-acid chain: GRAS family protein TF80 (438 aa).

A GRAS domain is found at 13–436 (LRYDSHGSNP…RPLFSVSAWK (424 aa)). The tract at residues 20–81 (SNPMIPLIEC…YKIVKHLPGV (62 aa)) is leucine repeat I (LRI). The VHIID stretch occupies residues 100-165 (QKYFYDLCPF…GGPPFLKITG (66 aa)). Residues 131 to 135 (VHIID) carry the VHIID motif. The tract at residues 175-207 (QMSFHLTTEAGILDFPLQFNPIISKLEDVDFEN) is leucine repeat II (LRII). Positions 216–359 (VAISSVLQLH…SMLLGEQIKN (144 aa)) are PFYRE. The LXXLL motif signature appears at 224–228 (LHSLL). Positions 362–436 (TCEGVDRKER…RPLFSVSAWK (75 aa)) are SAW.

This sequence belongs to the GRAS family. In terms of assembly, interacts with RAM1.

It is found in the nucleus. This chain is GRAS family protein TF80 (TF80), found in Medicago truncatula (Barrel medic).